Here is a 327-residue protein sequence, read N- to C-terminus: N-acetyl-gamma-glutamyl-phosphate reductase (327 aa).

Cys136 is an active-site residue.

It belongs to the NAGSA dehydrogenase family. Type 1 subfamily.

The protein localises to the cytoplasm. The enzyme catalyses N-acetyl-L-glutamate 5-semialdehyde + phosphate + NADP(+) = N-acetyl-L-glutamyl 5-phosphate + NADPH + H(+). The protein operates within amino-acid biosynthesis; L-arginine biosynthesis; N(2)-acetyl-L-ornithine from L-glutamate: step 3/4. Functionally, catalyzes the NADPH-dependent reduction of N-acetyl-5-glutamyl phosphate to yield N-acetyl-L-glutamate 5-semialdehyde. The protein is N-acetyl-gamma-glutamyl-phosphate reductase of Xylella fastidiosa (strain M23).